Here is a 640-residue protein sequence, read N- to C-terminus: Dextranase (640 aa).

A signal peptide spans 1-32 (MPGTGLGRLAKRMTAAAAVFFISTSAVLPAQA). Residues 33–49 (ATAPAAAPPGVPAALKA) constitute a propeptide that is removed on maturation. The segment at 248–269 (EQKERLVPTEESGSIHYPEPGE) is disordered.

This sequence belongs to the glycosyl hydrolase 49 family.

It is found in the secreted. The catalysed reaction is Endohydrolysis of (1-&gt;6)-alpha-D-glucosidic linkages in dextran.. In terms of biological role, efficiently decomposes water-insoluble glucan as well as dextran. In Arthrobacter sp. (strain CB-8), this protein is Dextranase.